Here is a 310-residue protein sequence, read N- to C-terminus: Porphobilinogen deaminase (310 aa).

Cysteine 242 carries the post-translational modification S-(dipyrrolylmethanemethyl)cysteine.

It belongs to the HMBS family. As to quaternary structure, monomer. Requires dipyrromethane as cofactor.

The enzyme catalyses 4 porphobilinogen + H2O = hydroxymethylbilane + 4 NH4(+). It participates in porphyrin-containing compound metabolism; protoporphyrin-IX biosynthesis; coproporphyrinogen-III from 5-aminolevulinate: step 2/4. Functionally, tetrapolymerization of the monopyrrole PBG into the hydroxymethylbilane pre-uroporphyrinogen in several discrete steps. The sequence is that of Porphobilinogen deaminase from Shewanella pealeana (strain ATCC 700345 / ANG-SQ1).